The sequence spans 255 residues: UPF0246 protein CC_3385 (255 aa).

This sequence belongs to the UPF0246 family.

This chain is UPF0246 protein CC_3385, found in Caulobacter vibrioides (strain ATCC 19089 / CIP 103742 / CB 15) (Caulobacter crescentus).